Consider the following 122-residue polypeptide: NADH-quinone oxidoreductase subunit A (122 aa).

3 helical membrane-spanning segments follow: residues 10 to 30 (LIIF…LTAG), 67 to 87 (FALL…WAVV), and 91 to 111 (LGLF…IGLI).

The protein belongs to the complex I subunit 3 family. NDH-1 is composed of 14 different subunits. Subunits NuoA, H, J, K, L, M, N constitute the membrane sector of the complex.

It is found in the cell membrane. It carries out the reaction a quinone + NADH + 5 H(+)(in) = a quinol + NAD(+) + 4 H(+)(out). Functionally, NDH-1 shuttles electrons from NADH, via FMN and iron-sulfur (Fe-S) centers, to quinones in the respiratory chain. The immediate electron acceptor for the enzyme in this species is believed to be a menaquinone. Couples the redox reaction to proton translocation (for every two electrons transferred, four hydrogen ions are translocated across the cytoplasmic membrane), and thus conserves the redox energy in a proton gradient. In Geobacillus kaustophilus (strain HTA426), this protein is NADH-quinone oxidoreductase subunit A.